We begin with the raw amino-acid sequence, 549 residues long: Glucose-6-phosphate isomerase (549 aa).

Glutamate 355 functions as the Proton donor in the catalytic mechanism. Residues histidine 386 and lysine 514 contribute to the active site.

This sequence belongs to the GPI family.

Its subcellular location is the cytoplasm. The enzyme catalyses alpha-D-glucose 6-phosphate = beta-D-fructose 6-phosphate. It participates in carbohydrate biosynthesis; gluconeogenesis. Its pathway is carbohydrate degradation; glycolysis; D-glyceraldehyde 3-phosphate and glycerone phosphate from D-glucose: step 2/4. In terms of biological role, catalyzes the reversible isomerization of glucose-6-phosphate to fructose-6-phosphate. This is Glucose-6-phosphate isomerase from Salmonella enteritidis PT4 (strain P125109).